We begin with the raw amino-acid sequence, 182 residues long: Adenine phosphoribosyltransferase (182 aa).

Belongs to the purine/pyrimidine phosphoribosyltransferase family. As to quaternary structure, homodimer.

The protein localises to the cytoplasm. It catalyses the reaction AMP + diphosphate = 5-phospho-alpha-D-ribose 1-diphosphate + adenine. The protein operates within purine metabolism; AMP biosynthesis via salvage pathway; AMP from adenine: step 1/1. Functionally, catalyzes a salvage reaction resulting in the formation of AMP, that is energically less costly than de novo synthesis. The protein is Adenine phosphoribosyltransferase of Shewanella frigidimarina (strain NCIMB 400).